Here is a 284-residue protein sequence, read N- to C-terminus: 2-dehydro-3-deoxyphosphooctonate aldolase (284 aa).

It belongs to the KdsA family.

Its subcellular location is the cytoplasm. It carries out the reaction D-arabinose 5-phosphate + phosphoenolpyruvate + H2O = 3-deoxy-alpha-D-manno-2-octulosonate-8-phosphate + phosphate. The protein operates within carbohydrate biosynthesis; 3-deoxy-D-manno-octulosonate biosynthesis; 3-deoxy-D-manno-octulosonate from D-ribulose 5-phosphate: step 2/3. It participates in bacterial outer membrane biogenesis; lipopolysaccharide biosynthesis. In Serratia proteamaculans (strain 568), this protein is 2-dehydro-3-deoxyphosphooctonate aldolase.